Reading from the N-terminus, the 102-residue chain is DNA/RNA-binding protein Alba 2 (102 aa).

DNA contacts are provided by Arg-10, Arg-13, Arg-40, Arg-42, Asn-43, Arg-46, and Arg-86.

It belongs to the histone-like Alba family. As to quaternary structure, forms homodimers and homotetramers; oligomerization is enhanced and stabilized by DNA. Interacts with Alba 1.

The protein localises to the cytoplasm. Its subcellular location is the chromosome. In terms of biological role, binds double-stranded DNA tightly but without sequence specificity. Involved in DNA compaction. In Aeropyrum pernix (strain ATCC 700893 / DSM 11879 / JCM 9820 / NBRC 100138 / K1), this protein is DNA/RNA-binding protein Alba 2.